The following is a 437-amino-acid chain: Protein disulfide-isomerase tmx3a (437 aa).

An N-terminal signal peptide occupies residues 1-21 (MANMRNIILTALLSAIALVSG). Residues 22–126 (YVEGLDDKFT…IIEFTNRVSG (105 aa)) enclose the Thioredoxin domain. Over 22–368 (YVEGLDDKFT…KNTVMSMVET (347 aa)) the chain is Extracellular. Residues Cys48 and Cys51 each act as nucleophile in the active site. Cys48 and Cys51 are joined by a disulfide. The N-linked (GlcNAc...) asparagine glycan is linked to Asn308. A helical membrane pass occupies residues 369–389 (APVFSCFVLGLPVGVVVLVIY). Topologically, residues 390-437 (ATCTAVPADDEKPEEEATASPALDTHGKKAIESQPESTEKTSEAKKED) are cytoplasmic. The tract at residues 398 to 437 (DDEKPEEEATASPALDTHGKKAIESQPESTEKTSEAKKED) is disordered. The segment covering 414 to 437 (THGKKAIESQPESTEKTSEAKKED) has biased composition (basic and acidic residues). Positions 434–437 (KKED) match the Di-lysine motif motif.

It localises to the endoplasmic reticulum membrane. The enzyme catalyses Catalyzes the rearrangement of -S-S- bonds in proteins.. Probable disulfide isomerase, which participates in the folding of proteins containing disulfide bonds. May act as a dithiol oxidase. Acts as a regulator of endoplasmic reticulum-mitochondria contact sites via its ability to regulate redox signals. This Danio rerio (Zebrafish) protein is Protein disulfide-isomerase tmx3a (tmx3a).